The following is a 253-amino-acid chain: ATP synthase subunit a (253 aa).

The next 6 membrane-spanning stretches (helical) occupy residues 30–50 (FTNA…VLLA), 88–108 (FFPF…IGLV), 118–138 (IAVT…YGLI), 144–164 (FLGI…MIMI), 184–204 (MLAG…LLGA), and 211–231 (VAPL…LVAF).

Belongs to the ATPase A chain family. As to quaternary structure, F-type ATPases have 2 components, CF(1) - the catalytic core - and CF(0) - the membrane proton channel. CF(1) has five subunits: alpha(3), beta(3), gamma(1), delta(1), epsilon(1). CF(0) has three main subunits: a(1), b(2) and c(9-12). The alpha and beta chains form an alternating ring which encloses part of the gamma chain. CF(1) is attached to CF(0) by a central stalk formed by the gamma and epsilon chains, while a peripheral stalk is formed by the delta and b chains.

It localises to the cell inner membrane. Key component of the proton channel; it plays a direct role in the translocation of protons across the membrane. In Beijerinckia indica subsp. indica (strain ATCC 9039 / DSM 1715 / NCIMB 8712), this protein is ATP synthase subunit a.